Here is a 198-residue protein sequence, read N- to C-terminus: Ribonuclease HII (198 aa).

Positions histidine 10 to serine 198 constitute an RNase H type-2 domain. Residues aspartate 16, glutamate 17, and aspartate 108 each contribute to the a divalent metal cation site.

Belongs to the RNase HII family. It depends on Mn(2+) as a cofactor. Mg(2+) is required as a cofactor.

Its subcellular location is the cytoplasm. It carries out the reaction Endonucleolytic cleavage to 5'-phosphomonoester.. In terms of biological role, endonuclease that specifically degrades the RNA of RNA-DNA hybrids. The polypeptide is Ribonuclease HII (Salmonella schwarzengrund (strain CVM19633)).